A 343-amino-acid polypeptide reads, in one-letter code: Methylthioribose-1-phosphate isomerase (343 aa).

Substrate-binding positions include 48–50, arginine 88, and glutamine 193; that span reads RGA. Aspartate 234 (proton donor) is an active-site residue. 244-245 contacts substrate; it reads NK.

It belongs to the eIF-2B alpha/beta/delta subunits family. MtnA subfamily.

The catalysed reaction is 5-(methylsulfanyl)-alpha-D-ribose 1-phosphate = 5-(methylsulfanyl)-D-ribulose 1-phosphate. It functions in the pathway amino-acid biosynthesis; L-methionine biosynthesis via salvage pathway; L-methionine from S-methyl-5-thio-alpha-D-ribose 1-phosphate: step 1/6. In terms of biological role, catalyzes the interconversion of methylthioribose-1-phosphate (MTR-1-P) into methylthioribulose-1-phosphate (MTRu-1-P). The chain is Methylthioribose-1-phosphate isomerase from Thermotoga petrophila (strain ATCC BAA-488 / DSM 13995 / JCM 10881 / RKU-1).